Here is a 247-residue protein sequence, read N- to C-terminus: Protein NipSnap homolog 3A (247 aa).

Residues K48 and K166 each carry the N6-acetyllysine modification.

This sequence belongs to the NipSnap family.

The protein localises to the cytoplasm. It localises to the cytosol. This Pongo abelii (Sumatran orangutan) protein is Protein NipSnap homolog 3A (NIPSNAP3A).